The following is a 250-amino-acid chain: Precorrin-4 C(11)-methyltransferase (250 aa).

Belongs to the precorrin methyltransferase family.

The catalysed reaction is precorrin-4 + S-adenosyl-L-methionine = precorrin-5 + S-adenosyl-L-homocysteine. The protein operates within cofactor biosynthesis; adenosylcobalamin biosynthesis; cob(II)yrinate a,c-diamide from precorrin-2 (aerobic route): step 4/10. Catalyzes the methylation of C-11 in precorrin-4 to form precorrin-5. The polypeptide is Precorrin-4 C(11)-methyltransferase (cobM) (Pseudomonas aeruginosa (strain ATCC 15692 / DSM 22644 / CIP 104116 / JCM 14847 / LMG 12228 / 1C / PRS 101 / PAO1)).